Consider the following 347-residue polypeptide: NADH-ubiquinone oxidoreductase chain 2 (347 aa).

10 helical membrane-spanning segments follow: residues 13–33, 55–75, 96–116, 123–143, 149–169, 178–198, 201–221, 247–267, 274–294, and 326–346; these read IFAG…WVGL, AAIK…MAIL, LMIM…FWVP, PLMS…SIMY, LNVN…SWGG, ILAY…PYNP, TILN…LLNL, TLLS…WVII, NSLI…YFYL, and LPTL…MLMI.

This sequence belongs to the complex I subunit 2 family. Core subunit of respiratory chain NADH dehydrogenase (Complex I) which is composed of 45 different subunits. Interacts with TMEM242.

Its subcellular location is the mitochondrion inner membrane. It carries out the reaction a ubiquinone + NADH + 5 H(+)(in) = a ubiquinol + NAD(+) + 4 H(+)(out). Its function is as follows. Core subunit of the mitochondrial membrane respiratory chain NADH dehydrogenase (Complex I) which catalyzes electron transfer from NADH through the respiratory chain, using ubiquinone as an electron acceptor. Essential for the catalytic activity and assembly of complex I. The sequence is that of NADH-ubiquinone oxidoreductase chain 2 from Pan paniscus (Pygmy chimpanzee).